A 242-amino-acid chain; its full sequence is Ribonuclease PH (242 aa).

Phosphate is bound by residues Arg-89 and 127–129; that span reads GTR.

This sequence belongs to the RNase PH family. As to quaternary structure, homohexameric ring arranged as a trimer of dimers.

The enzyme catalyses tRNA(n+1) + phosphate = tRNA(n) + a ribonucleoside 5'-diphosphate. Phosphorolytic 3'-5' exoribonuclease that plays an important role in tRNA 3'-end maturation. Removes nucleotide residues following the 3'-CCA terminus of tRNAs; can also add nucleotides to the ends of RNA molecules by using nucleoside diphosphates as substrates, but this may not be physiologically important. Probably plays a role in initiation of 16S rRNA degradation (leading to ribosome degradation) during starvation. This is Ribonuclease PH from Neisseria gonorrhoeae (strain ATCC 700825 / FA 1090).